Consider the following 743-residue polypeptide: MASEITNGKNGQNGKNGQKEESDSQIAPPIPYPKSVAFIISNEFCERFNYYGMRTILVLYLTNKLGYNEETATVLFHTFTMLVYIFPLIGALIADGWLGKYKTILYLSLVYSLGAMVVSFGAVPLSGMPTKAVTVVGLLLIAIGTGGIKPCVSAFGGDQFSLPAQSFQLAKFFSLFYFAINAGSLISTTFTPILRADVHCFGDQDCFSLAFGVPAILMIFSVIIFMAGKRLYRCQPPAGNMIFGVSRCIADAFKGWQKRRHSEPMESFLDYAKPTVGSRMVQETKCLGRILRLFLPFPVFWALFDQQGSRWTFQATRMDGNVLGFQIKPDQMQVVNPLLILGFLPLFDYIIYPALARCGIRRPLQKLTLGLLLAALGFFLSAGLEMKMEQAAYRATPIEPDMTHLRIYNGMPCRYEISSAVVQTPRVIEPLNVWEDLSLQMTESKEYTFNAQPVSGECPSIIDKLRLQPGKSVSYFLAQDKLVEFADGLQMAATDTGRTSVRALLNTPDGEGPVLLSTESATSQEPPLTLDKGNVPQLHRITPGFARVDINGKKVASFEAKEGRLYSILVTGSARDGYQHNVIEVVALSTVSILWQLPQIVVMTAAEVMFSVTGLEFSYSQSPPSMKSVLQACWLLSVAIGNMLVVVIAEFKFTSSQSGEFTLFASLMLVDMMIFLWLARSYQYKDQREDFEDDDDATIDSVMQSKPKATTVDTTARKTNGIEAEPGYGAYRNHAYDNDFSEA.

The disordered stretch occupies residues 1–28 (MASEITNGKNGQNGKNGQKEESDSQIAP). Over residues 7 to 16 (NGKNGQNGKN) the composition is skewed to low complexity. Transmembrane regions (helical) follow at residues 74–94 (VLFH…ALIA), 104–124 (ILYL…GAVP), 132–152 (AVTV…KPCV), 173–193 (FSLF…FTPI), 207–227 (FSLA…IFMA), 334–354 (VVNP…IYPA), 364–384 (LQKL…SAGL), 597–619 (LPQI…EFSY), 629–649 (VLQA…VVIA), and 659–679 (GEFT…LWLA).

This sequence belongs to the major facilitator superfamily. Proton-dependent oligopeptide transporter (POT/PTR) (TC 2.A.17) family. Expressed in thorax and abdomen of females: apical epithelial membranes of midgut, rectum, and reproductive tract. Also expressed in neuropil of the central nervous system, with elevated expression within the alpha- and beta-lobes of the mushroom bodies.

The protein resides in the membrane. Important role in absorption of dietary peptides. High-affinity transporter of alanylalanine. Dipeptide transport activity is proton dependent. In Drosophila melanogaster (Fruit fly), this protein is Peptide transporter family 1 (yin).